The sequence spans 203 residues: NAD(P)H-quinone oxidoreductase subunit M, chloroplastic (203 aa).

A chloroplast-targeting transit peptide spans methionine 1–glycine 21. Over residues serine 34–asparagine 48 the composition is skewed to low complexity. Residues serine 34–proline 61 are disordered.

The protein belongs to the NDH complex subunit M family. In terms of assembly, part of the chloroplast NDH complex, composed of a mixture of chloroplast and nucleus encoded subunits. Component of the NDH subcomplex A, at least composed of ndhH, ndhI, ndhJ, ndhK, ndhL, ndhM, ndhN and ndhO.

The protein localises to the plastid. The protein resides in the chloroplast thylakoid membrane. It carries out the reaction a plastoquinone + NADH + (n+1) H(+)(in) = a plastoquinol + NAD(+) + n H(+)(out). The enzyme catalyses a plastoquinone + NADPH + (n+1) H(+)(in) = a plastoquinol + NADP(+) + n H(+)(out). Functionally, NDH shuttles electrons from NAD(P)H:plastoquinone, via FMN and iron-sulfur (Fe-S) centers, to quinones in the photosynthetic chain and possibly in a chloroplast respiratory chain. The immediate electron acceptor for the enzyme in this species is believed to be plastoquinone. Couples the redox reaction to proton translocation, and thus conserves the redox energy in a proton gradient. The sequence is that of NAD(P)H-quinone oxidoreductase subunit M, chloroplastic from Populus jackii (Balm of Gilead).